A 123-amino-acid polypeptide reads, in one-letter code: uncharacterized protein (123 aa).

Helical transmembrane passes span 1–21 and 103–123; these read MVLPLMFMYCKLAMLSLAVGC and LESSFFMTISLYMNISYILLF.

The protein resides in the membrane. This is an uncharacterized protein from Saccharomyces cerevisiae (strain ATCC 204508 / S288c) (Baker's yeast).